The primary structure comprises 340 residues: Cytosolic Fe-S cluster assembly factor NBP35 (340 aa).

Positions 31, 45, 48, and 54 each coordinate [4Fe-4S] cluster. 84–91 contributes to the ATP binding site; sequence GKGGVGKS. [4Fe-4S] cluster is bound by residues Cys257 and Cys260.

Belongs to the Mrp/NBP35 ATP-binding proteins family. NUBP1/NBP35 subfamily. Heterotetramer of 2 NBP35 and 2 CFD1 chains. [4Fe-4S] cluster is required as a cofactor.

It is found in the cytoplasm. Component of the cytosolic iron-sulfur (Fe/S) protein assembly (CIA) machinery. Required for maturation of extramitochondrial Fe-S proteins. The NBP35-CFD1 heterotetramer forms a Fe-S scaffold complex, mediating the de novo assembly of an Fe-S cluster and its transfer to target apoproteins. The chain is Cytosolic Fe-S cluster assembly factor NBP35 from Phaeosphaeria nodorum (strain SN15 / ATCC MYA-4574 / FGSC 10173) (Glume blotch fungus).